The following is a 121-amino-acid chain: Small ribosomal subunit protein bS6 (121 aa).

A disordered region spans residues 102–121 (MMRNVEREEARKAQQQEYAA). Positions 105 to 115 (NVEREEARKAQ) are enriched in basic and acidic residues.

It belongs to the bacterial ribosomal protein bS6 family.

In terms of biological role, binds together with bS18 to 16S ribosomal RNA. In Polaromonas sp. (strain JS666 / ATCC BAA-500), this protein is Small ribosomal subunit protein bS6.